A 948-amino-acid chain; its full sequence is MYGSARSVGKVEPSSQSPGRSPRLPRSPRLGHRRTNSTGGSSGNSVGGGSGKTLSMENIQSLNAAYATSGPMYLSDHENVGAETPKSTMTLGRSGGRLPYGVRMTAMGSSPNIASSGVASDTIAFGEHHLPPVSMASTVPHSLRQARDNTIMDLQTQLKEVLRENDLLRKDVEVKESKLSSSMNSIKTFWSPELKKERALRKDEASKITIWKEQYRVVQEENQHMQMTIQALQDELRIQRDLNQLFQQDSSSRTGEPCVAELTEENFQRLHAEHERQAKELFLLRKTLEEMELRIETQKQTLNARDESIKKLLEMLQSKGLSAKATEEDHERTRRLAEAEMHVHHLESLLEQKEKENNMLREEMHRRFENAPDSAKTKALQTVIEMKDSKISSMERGLRDLEEEIQMLKSNGALSTEEREEEMKQMEVYRSHSKFMKNKIGQVKQELSRKDTELLALQTKLETLTNQFSDSKQHIEVLKESLTAKEQRAAILQTEVDALRLRLEEKETMLNKKTKQIQDMAEEKGTQAGEIHDLKDMLDVKERKVNVLQKKIENLQEQLRDKEKQMSSLKERVKSLQADTTNTDTALTTLEEALADKERTIERLKEQRDRDEREKQEEIDTYKKDLKDLKEKVSLLQGDLSEKEASLLDLKEHASSLASSGLKKDSRLKTLEIALEQKKEECLKMESQLKKAHEATLEARASPEMSDRIQQLEREIARYKDESSKAQTEVDRLLEILKEVENEKNDKDKKIAELESLTSRQVKDQNKKVANLKHKEQVEKKKSAQMLEEARRREDSLSDSSQQLQVEELLMAMEKVKQELESMKAKLSSTQQSLAEKETHLTNLRAERRKHLEEVLEMKQEALLAAISEKDANIALLELSSSKKKTQEEVAALKREKDRLVQQLKQQTQNRMKLMADNYEDDHFRSSRSNQTNHKPSPDQDEEEGIWA.

The interval 1–54 is disordered; that stretch reads MYGSARSVGKVEPSSQSPGRSPRLPRSPRLGHRRTNSTGGSSGNSVGGGSGKTL. Position 10 is an N6-acetyllysine (K10). Residues 13-28 are compositionally biased toward low complexity; that stretch reads PSSQSPGRSPRLPRSP. 3 positions are modified to phosphoserine: S17, S21, and S37. T38 is modified (phosphothreonine). Residues 40 to 51 show a composition bias toward gly residues; it reads GSSGNSVGGGSG. Phosphoserine is present on residues S55, S75, S94, S796, and S937. The stretch at 144 to 920 forms a coiled coil; the sequence is RQARDNTIMD…RMKLMADNYE (777 aa). The segment covering 773–796 has biased composition (basic and acidic residues); the sequence is KHKEQVEKKKSAQMLEEARRREDS. Disordered stretches follow at residues 773–801 and 903–948; these read KHKE…SDSS and QLKQ…GIWA. Acidic residues predominate over residues 939–948; it reads DQDEEEGIWA.

As to quaternary structure, interacts with the GTB-bound forms of RAB6A isoform 1 and isoform 2 and with RAB6B. The interaction was strongest with RAB6B, followed by RAB6A isoform 2 and weakest with RAB6A isoform 1. Part of a complex with CHUK, IKBKB and IKBKG. Interacts with CHUK, IKBKB and IKBKG. The interaction with IKBKG is independent of CHUK and IKBKB. Interacts with NFKBIA. Isoform 1 interacts through its C-terminus with the PDZ domains of RIMS1 and RIMS2. Interacts with ERC2/CAST1. Interacts with SDCCAG8. Part of a cortical microtubule stabilization complex (CMSC) composed of KANK1, PPFIA1, PPFIBP1, ERC1/ELKS, PHLDB2/LL5beta, CLASPs, KIF21A and possibly additional interactors; within CMSCs KANK1 and PHLDB2/LL5beta appear to be the core components for targeting of microtubule-binding proteins KIF21A and CLASPs, whereas PPFIA1, PPFIBP1 and ERC1/ELKS serve as scaffolds for protein clustering. Isoform 1 is specifically expressed in brain. A further probable isoform is widely expressed outside of brain It is referred to as ERC1a by PubMed:12391317 and characterized by a C-terminus identical to that of isoforms 1 in human and mouse.

It localises to the cytoplasm. Its subcellular location is the cytoskeleton. The protein resides in the microtubule organizing center. The protein localises to the centrosome. It is found in the membrane. It localises to the golgi apparatus membrane. Its subcellular location is the presynaptic active zone. The protein resides in the cell projection. The protein localises to the podosome. Its function is as follows. Regulatory subunit of the IKK complex. Probably recruits IkappaBalpha/NFKBIA to the complex. May be involved in the organization of the cytomatrix at the nerve terminals active zone (CAZ) which regulates neurotransmitter release. May be involved in vesicle trafficking at the CAZ. May be involved in Rab-6 regulated endosomes to Golgi transport. The sequence is that of ELKS/Rab6-interacting/CAST family member 1 (Erc1) from Rattus norvegicus (Rat).